The primary structure comprises 174 residues: Achaete-scute homolog 3 (174 aa).

The basic motif stretch occupies residues 92-105 (AFIRKRNERERQRV). The bHLH domain maps to 92 to 144 (AFIRKRNERERQRVKCVNEGYARLRRHLPEDYLEKRLSKVETLRAAIKYISYL). The tract at residues 106-144 (KCVNEGYARLRRHLPEDYLEKRLSKVETLRAAIKYISYL) is helix-loop-helix motif. Positions 153 to 174 (SETKKNPRTASCGSLDPALRVI) are disordered.

Efficient DNA binding requires dimerization with another bHLH protein. Expressed in the salivary duct cells. Also expressed at lower levels in testis and epididymis. Expressed in the olfactory epithelium (OE), in a subset of apical microvillar cells.

It localises to the nucleus. Functionally, transcriptional repressor. Inhibits myogenesis. Plays a role in progenitor cells which differentiate into ductal and acinar, but not myoepithelial, cell lineages in the salivary glands. Involved in the functions of the microvillar cells and Bowman's glands and probably, in a non-cell-autonomous manner, in the development or regeneration of a complete olfactory epithelium (OE). The protein is Achaete-scute homolog 3 (Ascl3) of Mus musculus (Mouse).